The following is a 338-amino-acid chain: Malate dehydrogenase, mitochondrial (338 aa).

The transit peptide at 1–24 (MLSALARPAGAALRRSFSTSAQNN) directs the protein to the mitochondrion. NAD(+) contacts are provided by residues 31–37 (GASGGIG) and aspartate 57. Residue serine 33 is glycosylated (O-linked (GalNAc...) serine). Lysine 78 and lysine 91 each carry N6-acetyllysine; alternate. Residues lysine 78 and lysine 91 each carry the N6-succinyllysine; alternate modification. The substrate site is built by arginine 104 and arginine 110. NAD(+)-binding positions include asparagine 117 and 140-142 (ISN). Asparagine 142 is a substrate binding site. Lysine 165 is subject to N6-acetyllysine. Aspartate 173 serves as the catalytic Proton relay. A substrate-binding site is contributed by arginine 176. Residue lysine 185 is modified to N6-acetyllysine; alternate. Lysine 185 carries the post-translational modification N6-succinyllysine; alternate. The Proton acceptor role is filled by histidine 200. N6-succinyllysine is present on lysine 203. An N6-acetyllysine; alternate mark is found at lysine 215 and lysine 239. Lysine 215 and lysine 239 each carry N6-succinyllysine; alternate. Lysine 239 carries the N6-malonyllysine; alternate modification. A Phosphoserine modification is found at serine 246. Position 251 (methionine 251) interacts with NAD(+). Lysine 269 bears the N6-succinyllysine mark. N6-acetyllysine; alternate is present on residues lysine 296, lysine 301, lysine 307, lysine 314, and lysine 324. 5 positions are modified to N6-succinyllysine; alternate: lysine 296, lysine 301, lysine 307, lysine 314, and lysine 324. Lysine 307 bears the N6-malonyllysine; alternate mark. Residue serine 326 is modified to Phosphoserine. 3 positions are modified to N6-acetyllysine; alternate: lysine 328, lysine 329, and lysine 335. Lysine 328 bears the N6-succinyllysine; alternate mark. N6-malonyllysine; alternate is present on lysine 329. The residue at position 335 (lysine 335) is an N6-succinyllysine; alternate.

It belongs to the LDH/MDH superfamily. MDH type 1 family. Homodimer. Post-translationally, acetylation is enhanced after treatment either with trichostin A (TSA) or with nicotinamide (NAM) with the appearance of tri- and tetraacetylations. Glucose also increases acetylation. In terms of tissue distribution, ubiquitously expressed. Highly expressed in skeletal muscle and heart. Also expressed in liver, ileum, colon, kidney and adipose tissue, and at very low levels in lung, pancreas, stomach and spleen.

It localises to the mitochondrion matrix. It carries out the reaction (S)-malate + NAD(+) = oxaloacetate + NADH + H(+). With respect to regulation, enzyme activity is enhanced by acetylation. The chain is Malate dehydrogenase, mitochondrial from Felis catus (Cat).